Here is a 353-residue protein sequence, read N- to C-terminus: Stachydrine N-demethylase reductase subunit Stc4 (353 aa).

The FAD-binding FR-type domain maps to 11 to 114; it reads SDAEPLECVT…IGPAGKFSIV (104 aa). Residues 269–353 form the 2Fe-2S ferredoxin-type domain; sequence AEIAFALSGV…KPLRRVSVEA (85 aa). Positions 303, 308, 311, and 341 each coordinate [2Fe-2S] cluster.

The protein in the N-terminal section; belongs to the FAD-binding oxidoreductase type 6 family. The system is probably composed of an oxygenase subunit (Stc2) and two reductase subunits (Stc3 and Stc4). It depends on FAD as a cofactor. Requires [2Fe-2S] cluster as cofactor.

Functionally, reductase involved in the catabolism of stachydrine (L-proline betaine), a source of carbon and nitrogen. Part of a Rieske-type oxygenase system that catalyzes the demethylation of stachydrine to produce N-methyl-L-proline (monomethylproline). This subunit is probably involved in the transfer of electrons from NAD(P)H to the catalytic subunit Stc2. The polypeptide is Stachydrine N-demethylase reductase subunit Stc4 (Rhizobium meliloti (strain 1021) (Ensifer meliloti)).